A 243-amino-acid polypeptide reads, in one-letter code: 4-hydroxy-tetrahydrodipicolinate reductase (243 aa).

NAD(+) contacts are provided by residues Gly-9–Met-14, Gly-78–Ser-80, and Ala-104–Phe-107. The active-site Proton donor/acceptor is the His-134. Position 135 (His-135) interacts with (S)-2,3,4,5-tetrahydrodipicolinate. Lys-138 acts as the Proton donor in catalysis. Gly-144–Thr-145 provides a ligand contact to (S)-2,3,4,5-tetrahydrodipicolinate.

Belongs to the DapB family.

It is found in the cytoplasm. It carries out the reaction (S)-2,3,4,5-tetrahydrodipicolinate + NAD(+) + H2O = (2S,4S)-4-hydroxy-2,3,4,5-tetrahydrodipicolinate + NADH + H(+). The enzyme catalyses (S)-2,3,4,5-tetrahydrodipicolinate + NADP(+) + H2O = (2S,4S)-4-hydroxy-2,3,4,5-tetrahydrodipicolinate + NADPH + H(+). Its pathway is amino-acid biosynthesis; L-lysine biosynthesis via DAP pathway; (S)-tetrahydrodipicolinate from L-aspartate: step 4/4. Functionally, catalyzes the conversion of 4-hydroxy-tetrahydrodipicolinate (HTPA) to tetrahydrodipicolinate. The sequence is that of 4-hydroxy-tetrahydrodipicolinate reductase from Legionella pneumophila (strain Corby).